The primary structure comprises 166 residues: 3-hydroxyacyl-[acyl-carrier-protein] dehydratase, mitochondrial (166 aa).

Residues M1–F17 constitute a mitochondrion transit peptide. Positions E34 to K125 constitute a MaoC-like domain.

In terms of assembly, homodimer. In terms of tissue distribution, expressed in leaves, roots, siliques and flowers.

It localises to the mitochondrion. The catalysed reaction is a (3R)-hydroxyacyl-[ACP] = a (2E)-enoyl-[ACP] + H2O. It catalyses the reaction (3R)-hydroxyhexadecanoyl-[ACP] = (2E)-hexadecenoyl-[ACP] + H2O. The enzyme catalyses (3R)-hydroxydecanoyl-[ACP] = (2E)-decenoyl-[ACP] + H2O. Its pathway is lipid metabolism; fatty acid biosynthesis. In terms of biological role, 3-hydroxyl-[acyl-carrier-protein] (3-hydroxyl-ACP) dehydratase required for mitochondrial fatty acid synthesis (mtFAS). MtFAS are essential for photorespiration and plant development, probably by influencing mitochondrial membrane lipid composition and other lipid metabolic pathways. This is 3-hydroxyacyl-[acyl-carrier-protein] dehydratase, mitochondrial from Arabidopsis thaliana (Mouse-ear cress).